Here is a 60-residue protein sequence, read N- to C-terminus: Single-pass membrane and coiled-coil domain-containing protein 4 homolog (60 aa).

The segment at 1-23 is disordered; it reads MRKLRGGQTKETRKQRQERKEEN. Over residues 8–23 the composition is skewed to basic and acidic residues; the sequence is QTKETRKQRQERKEEN. Positions 8–33 form a coiled coil; sequence QTKETRKQRQERKEENLKIQQQMKTI. A helical transmembrane segment spans residues 31-51; sequence KTIVLPTIGVIFLCIVVYVFL.

This sequence belongs to the SMCO4 family.

It is found in the membrane. The chain is Single-pass membrane and coiled-coil domain-containing protein 4 homolog from Anopheles gambiae (African malaria mosquito).